We begin with the raw amino-acid sequence, 785 residues long: Conserved oligomeric Golgi complex subunit 4 (785 aa).

The interval 1–24 (MADFDSPPKLSGVQPPSEGVGGGR) is disordered. At Ala-2 the chain carries N-acetylalanine. An interaction with SCFD1 region spans residues 2–84 (ADFDSPPKLS…VTLHRMGPNL (83 aa)). Ser-6 carries the phosphoserine modification. The tract at residues 85–153 (QLIEGDAKQL…TALRNEDYEQ (69 aa)) is interaction with STX5. The segment at 618 to 740 (PQVQPWINSF…SQMATILNLE (123 aa)) is d domain. The e domain; essential for proper cell surface glycosylation stretch occupies residues 741-785 (RVTEILDYWGPNSGPLTWRLTPAEVRQVLALRIDFRSEDIKRLRL).

This sequence belongs to the COG4 family. In terms of assembly, monomer. Component of the conserved oligomeric Golgi (COG) complex which is composed of eight different subunits and is required for normal Golgi morphology and localization. Mediates interaction of SCFD1 with the COG complex. Interacts with STX5.

It localises to the cytoplasm. The protein resides in the cytosol. Its subcellular location is the golgi apparatus membrane. Required for normal Golgi function. Plays a role in SNARE-pin assembly and Golgi-to-ER retrograde transport via its interaction with SCFD1. This chain is Conserved oligomeric Golgi complex subunit 4 (COG4), found in Pongo abelii (Sumatran orangutan).